Consider the following 184-residue polypeptide: ATP synthase subunit delta (184 aa).

This sequence belongs to the ATPase delta chain family. In terms of assembly, F-type ATPases have 2 components, F(1) - the catalytic core - and F(0) - the membrane proton channel. F(1) has five subunits: alpha(3), beta(3), gamma(1), delta(1), epsilon(1). F(0) has three main subunits: a(1), b(2) and c(10-14). The alpha and beta chains form an alternating ring which encloses part of the gamma chain. F(1) is attached to F(0) by a central stalk formed by the gamma and epsilon chains, while a peripheral stalk is formed by the delta and b chains.

It localises to the cell membrane. Functionally, f(1)F(0) ATP synthase produces ATP from ADP in the presence of a proton or sodium gradient. F-type ATPases consist of two structural domains, F(1) containing the extramembraneous catalytic core and F(0) containing the membrane proton channel, linked together by a central stalk and a peripheral stalk. During catalysis, ATP synthesis in the catalytic domain of F(1) is coupled via a rotary mechanism of the central stalk subunits to proton translocation. In terms of biological role, this protein is part of the stalk that links CF(0) to CF(1). It either transmits conformational changes from CF(0) to CF(1) or is implicated in proton conduction. This chain is ATP synthase subunit delta, found in Christiangramia forsetii (strain DSM 17595 / CGMCC 1.15422 / KT0803) (Gramella forsetii).